The sequence spans 263 residues: Lens fiber major intrinsic protein (263 aa).

Residues 1-9 (MWELRSASF) lie on the Cytoplasmic side of the membrane. Residues 10–29 (WRAIFAEFFATLFYVFFGLG) traverse the membrane as a helical segment. The Extracellular portion of the chain corresponds to 30 to 41 (ASLRWTPGPLHV). Residues 42–59 (LQVALAFGLALATLVQAV) form a helical membrane-spanning segment. At 60 to 61 (GH) the chain is on the cytoplasmic side. Positions 62-77 (ISGAHVNPAVTFAFLV) form an intramembrane region, discontinuously helical. The short motif at 68-70 (NPA) is the NPA 1 element. The Cytoplasmic segment spans residues 78 to 82 (GSQMS). Residues 83-106 (LLRAFCYMAAQLLGAVAGAAVLYS) form a helical membrane-spanning segment. The Extracellular portion of the chain corresponds to 107-127 (VTPPAVRGNLALNTLHPGVSV). A helical transmembrane segment spans residues 128–148 (GQATTVEIFLTLQFVLCIFAT). The Cytoplasmic portion of the chain corresponds to 149-156 (YDERRNGR). Residues 157-175 (LGSVALAVGFSLTLGHLFG) traverse the membrane as a helical segment. Topologically, residues 176 to 178 (MYY) are extracellular. The segment at residues 179-193 (TGAGMNPARSFAPAI) is an intramembrane region (discontinuously helical). The short motif at 184-186 (NPA) is the NPA 2 element. The Extracellular segment spans residues 194-200 (LTRNFTN). Residues 201–222 (HWVYWVGPIIGGGLGSLLYDFL) form a helical membrane-spanning segment. At 223–263 (LFPRLKSVSERLSILKGARPSDSNGQPEGTGEPVELKTQAL) the chain is on the cytoplasmic side. The tract at residues 227–237 (LKSVSERLSIL) is interaction with CALM. Phosphoserine occurs at positions 235, 243, and 245. Positions 240–263 (ARPSDSNGQPEGTGEPVELKTQAL) are disordered. N246 carries the post-translational modification Deamidated asparagine.

Belongs to the MIP/aquaporin (TC 1.A.8) family. In terms of assembly, homotetramer; each monomer provides an independent water pore. Two homotetramers on opposing membranes can dimerize, forming a cell-cell junction. Interacts with CALM; the calcium-calmodulin/CALM complex interacts with the cytoplasmic domains of two aquaporins, leading to channel closure. Interacts with BFSP1 (via C-terminus); prevents calcium-dependent inhibition of the water channel activity. Post-translationally, subject to partial proteolytic cleavage in the eye lens core. Partial proteolysis promotes interactions between tetramers from adjoining membranes. Fatty acylated at Met-1 and Lys-238. The acyl modifications, in decreasing order of ion abundance, are: oleoyl (C18:1) &gt; palmitoyl (C16:0) &gt; stearoyl (C18:0) &gt; eicosenoyl (C20:1) &gt; dihomo-gamma-linolenoyl (C20:3) &gt; palmitoleoyl (C16:1) &gt; eicosadienoyl (C20:2).

The protein resides in the cell membrane. The protein localises to the cell junction. The catalysed reaction is H2O(in) = H2O(out). The water channel activity is inhibited by calcium through calmodulin/CALM. Functionally, aquaporins form homotetrameric transmembrane channels, with each monomer independently mediating water transport across the plasma membrane along its osmotic gradient. Specifically expressed in lens fiber cells, this aquaporin is crucial for maintaining lens water homeostasis and transparency. Beyond water permeability, it also acts as a cell-to-cell adhesion molecule, forming thin junctions between lens fiber cells that are essential for maintaining the ordered structure and transparency of the lens. This is Lens fiber major intrinsic protein from Canis lupus familiaris (Dog).